The sequence spans 810 residues: DNA gyrase subunit A (810 aa).

In terms of domain architecture, Topo IIA-type catalytic spans Leu36 to Leu502. Tyr124 functions as the O-(5'-phospho-DNA)-tyrosine intermediate in the catalytic mechanism. Residues Gln529–Gly535 carry the GyrA-box motif.

This sequence belongs to the type II topoisomerase GyrA/ParC subunit family. Heterotetramer, composed of two GyrA and two GyrB chains. In the heterotetramer, GyrA contains the active site tyrosine that forms a transient covalent intermediate with DNA, while GyrB binds cofactors and catalyzes ATP hydrolysis.

It is found in the cytoplasm. It carries out the reaction ATP-dependent breakage, passage and rejoining of double-stranded DNA.. In terms of biological role, a type II topoisomerase that negatively supercoils closed circular double-stranded (ds) DNA in an ATP-dependent manner to modulate DNA topology and maintain chromosomes in an underwound state. Negative supercoiling favors strand separation, and DNA replication, transcription, recombination and repair, all of which involve strand separation. Also able to catalyze the interconversion of other topological isomers of dsDNA rings, including catenanes and knotted rings. Type II topoisomerases break and join 2 DNA strands simultaneously in an ATP-dependent manner. This chain is DNA gyrase subunit A, found in Borrelia hermsii (strain HS1 / DAH).